We begin with the raw amino-acid sequence, 474 residues long: Glycogen synthase (474 aa).

Lysine 15 contacts ADP-alpha-D-glucose.

Belongs to the glycosyltransferase 1 family. Bacterial/plant glycogen synthase subfamily.

It carries out the reaction [(1-&gt;4)-alpha-D-glucosyl](n) + ADP-alpha-D-glucose = [(1-&gt;4)-alpha-D-glucosyl](n+1) + ADP + H(+). It participates in glycan biosynthesis; glycogen biosynthesis. In terms of biological role, synthesizes alpha-1,4-glucan chains using ADP-glucose. The chain is Glycogen synthase from Chlamydia muridarum (strain MoPn / Nigg).